The chain runs to 245 residues: 14-3-3 protein theta (245 aa).

Belongs to the 14-3-3 family. Homodimer, and heterodimer with other family members.

The protein resides in the cytoplasm. In terms of biological role, adapter protein implicated in the regulation of a large spectrum of both general and specialized signaling pathways. Binds to a large number of partners, usually by recognition of a phosphoserine or phosphothreonine motif. Binding generally results in the modulation of the activity of the binding partner. This is 14-3-3 protein theta (YWHAQ) from Gallus gallus (Chicken).